Consider the following 133-residue polypeptide: Magnetosome protein MamC (133 aa).

The Cytoplasmic portion of the chain corresponds to 1–5 (MAAFN). A helical membrane pass occupies residues 6 to 26 (LALYLSKSIPGVGVLGGVIGG). Residues 27–67 (SAALAKNLKAKQRGEITTEEAVIDTGKEALGAGLATTVSAY) lie on the Lumenal side of the membrane. Residues 37-57 (KQRGEITTEEAVIDTGKEALG) form a magnetite interacting component (MIC) binds magnetite region. Residues 68–88 (AAGVVGGGLVVSLGTAFAVAV) form a helical membrane-spanning segment. Over 89-133 (AGKYAWDYGMEQMEAKLQEKKHQEQGGQTYGDNPDPFDPQELETP) the chain is Cytoplasmic. A disordered region spans residues 105–133 (LQEKKHQEQGGQTYGDNPDPFDPQELETP).

This sequence belongs to the magnetosome MamC family. In terms of assembly, probably interacts with MamA.

Its subcellular location is the magnetosome membrane. Functionally, probably helps control the size of magnetite crystals; in vitro synthesis of magnetite yields larger and more well-developed magnetite crystals in the presence of purified MamC. Binds Fe(3+). The lumenal domain probably binds magnetite crystals, affecting crystal size and shape. Purified MamC self-assembles into micelles in the presence of ferric chloride hexahydrate (FeCl(3).6H(2)O); both oxygen and iron are present in the proteinaceous micelles. Whether this is relevant in vivo is unknown. This is Magnetosome protein MamC from Magnetococcus marinus (strain ATCC BAA-1437 / JCM 17883 / MC-1).